A 156-amino-acid chain; its full sequence is 3-dehydroquinate dehydratase (156 aa).

Y31 functions as the Proton acceptor in the catalytic mechanism. 3 residues coordinate substrate: N83, H89, and D96. The Proton donor role is filled by H109. Substrate is bound by residues 110–111 (LS) and R120.

This sequence belongs to the type-II 3-dehydroquinase family. Homododecamer.

The catalysed reaction is 3-dehydroquinate = 3-dehydroshikimate + H2O. It participates in metabolic intermediate biosynthesis; chorismate biosynthesis; chorismate from D-erythrose 4-phosphate and phosphoenolpyruvate: step 3/7. Catalyzes a trans-dehydration via an enolate intermediate. In Chromobacterium violaceum (strain ATCC 12472 / DSM 30191 / JCM 1249 / CCUG 213 / NBRC 12614 / NCIMB 9131 / NCTC 9757 / MK), this protein is 3-dehydroquinate dehydratase.